A 173-amino-acid chain; its full sequence is UPF0398 protein SMU_470 (173 aa).

Belongs to the UPF0398 family.

The protein is UPF0398 protein SMU_470 of Streptococcus mutans serotype c (strain ATCC 700610 / UA159).